Here is a 514-residue protein sequence, read N- to C-terminus: uncharacterized protein (514 aa).

This is an uncharacterized protein from Caenorhabditis elegans.